Consider the following 624-residue polypeptide: NADPH-dependent diflavin oxidoreductase 1 (624 aa).

The region spanning 6–168 (IVILYGSETG…VYYEFEKRII (163 aa)) is the Flavodoxin-like domain. FMN is bound by residues 12-17 (SETGNA), 59-62 (STTG), 106-115 (LGDSSYPRFN), and Glu-142. Positions 226-474 (ETIRHGTVKK…LQNNHLLHED (249 aa)) constitute an FAD-binding FR-type domain. FAD is bound by residues Arg-384, 414-417 (RFYS), and 446-449 (GLCT). Residues 539–540 (SR) and 548–552 (AKYVQ) each bind NADP(+). Trp-624 contributes to the FAD binding site.

This sequence belongs to the NADPH-dependent diflavin oxidoreductase NDOR1 family. The protein in the N-terminal section; belongs to the flavodoxin family. In the C-terminal section; belongs to the flavoprotein pyridine nucleotide cytochrome reductase family. In terms of assembly, interacts with DRE2; as part of the cytosolic iron-sulfur (Fe-S) protein assembly (CIA) machinery. Requires FAD as cofactor. The cofactor is FMN.

The protein localises to the cytoplasm. Its subcellular location is the mitochondrion. It carries out the reaction 2 oxidized [2Fe-2S]-[protein] + NADPH = 2 reduced [2Fe-2S]-[protein] + NADP(+) + H(+). NADPH-dependent reductase which is a central component of the cytosolic iron-sulfur (Fe-S) protein assembly (CIA) machinery. Transfers electrons from NADPH via its FAD and FMN prosthetic groups to the [2Fe-2S] cluster of DRE2, another key component of the CIA machinery. In turn, this reduced cluster provides electrons for assembly of cytosolic iron-sulfur cluster proteins. Positively controls H(2)O(2)-induced cell death. This is NADPH-dependent diflavin oxidoreductase 1 from Kluyveromyces lactis (strain ATCC 8585 / CBS 2359 / DSM 70799 / NBRC 1267 / NRRL Y-1140 / WM37) (Yeast).